An 804-amino-acid polypeptide reads, in one-letter code: Probable replication endonuclease from prophage-like region 1 (804 aa).

Active-site O-(5'-phospho-DNA)-tyrosine intermediate residues include Tyr-498 and Tyr-502.

This sequence belongs to the phage GPA family.

Possible endonuclease which induces a single-strand cut and initiates DNA replication. This Salmonella typhi protein is Probable replication endonuclease from prophage-like region 1.